A 122-amino-acid chain; its full sequence is UPF0102 protein CPR_1677 (122 aa).

Belongs to the UPF0102 family.

This chain is UPF0102 protein CPR_1677, found in Clostridium perfringens (strain SM101 / Type A).